The chain runs to 306 residues: UDP-3-O-acyl-N-acetylglucosamine deacetylase (306 aa).

Residues His-79, His-238, and Asp-242 each coordinate Zn(2+). The active-site Proton donor is His-265.

The protein belongs to the LpxC family. Zn(2+) serves as cofactor.

The enzyme catalyses a UDP-3-O-[(3R)-3-hydroxyacyl]-N-acetyl-alpha-D-glucosamine + H2O = a UDP-3-O-[(3R)-3-hydroxyacyl]-alpha-D-glucosamine + acetate. It functions in the pathway glycolipid biosynthesis; lipid IV(A) biosynthesis; lipid IV(A) from (3R)-3-hydroxytetradecanoyl-[acyl-carrier-protein] and UDP-N-acetyl-alpha-D-glucosamine: step 2/6. Catalyzes the hydrolysis of UDP-3-O-myristoyl-N-acetylglucosamine to form UDP-3-O-myristoylglucosamine and acetate, the committed step in lipid A biosynthesis. The chain is UDP-3-O-acyl-N-acetylglucosamine deacetylase from Shewanella pealeana (strain ATCC 700345 / ANG-SQ1).